The primary structure comprises 251 residues: Transcription factor bHLH144 (251 aa).

Disordered stretches follow at residues 1–20 (MQNN…NMHN), 130–161 (YEEN…YGNT), and 173–202 (NNNN…RKKM). The span at 9–18 (FSDEVGDRNM) shows a compositional bias: basic and acidic residues. Over residues 130 to 147 (YEENDDNEGEEDGGDSEE) the composition is skewed to acidic residues. The segment covering 148 to 161 (VSTARTSSRDYGNT) has biased composition (polar residues). The segment covering 173-192 (NNNNNNNSRKQSLSGSASSS) has biased composition (low complexity). A bHLH domain is found at 186–235 (SGSASSSNNDGKGRKKMKKMMGVLRRIVPGGEQMNTACVLDEAVQYLKSL).

In terms of assembly, homodimer. Interacts with LHW.

The protein resides in the nucleus. The protein is Transcription factor bHLH144 (BHLH144) of Arabidopsis thaliana (Mouse-ear cress).